A 161-amino-acid chain; its full sequence is Alpha-crystallin A chain (161 aa).

The segment at 1–51 (ALGPFYPSRXXXXXXXXXXXXXXXXXXXXXXXXXXXXQSLFRTVLDSGISE) is required for complex formation with BFSP1 and BFSP2. The residue at position 38 (Gln-38) is a Deamidated glutamine; partial. One can recognise a sHSP domain in the interval 40–150 (LFRTVLDSGI…SHSERAIPVS (111 aa)). The residue at position 87 (Lys-87) is an N6-acetyllysine. Residue His-88 coordinates Zn(2+). Asn-89 is modified (deamidated asparagine; partial). Zn(2+) contacts are provided by Glu-90 and His-95. At Ser-110 the chain carries Phosphoserine. Residue Asn-111 is modified to Deamidated asparagine; partial. Cysteines 119 and 130 form a disulfide. Gln-135 is subject to Deamidated glutamine; partial. Residues 140–161 (ASHSERAIPVSREEKPSSAPSS) are disordered. The segment covering 141-155 (SHSERAIPVSREEKP) has biased composition (basic and acidic residues). Zn(2+) is bound at residue His-142. Residue Ser-150 is glycosylated (O-linked (GlcNAc) serine).

Belongs to the small heat shock protein (HSP20) family. In terms of assembly, heteromer composed of three CRYAA and one CRYAB subunits. Inter-subunit bridging via zinc ions enhances stability, which is crucial as there is no protein turn over in the lens. Can also form homodimers and homotetramers (dimers of dimers) which serve as the building blocks of homooligomers. Within homooligomers, the zinc-binding motif is created from residues of 3 different molecules. His-88 and Glu-90 from one molecule are ligands of the zinc ion, and His-95 and His-142 residues from additional molecules complete the site with tetrahedral coordination geometry. Part of a complex required for lens intermediate filament formation composed of BFSP1, BFSP2 and CRYAA. Post-translationally, undergoes age-dependent proteolytical cleavage at the C-terminus.

The protein localises to the cytoplasm. It localises to the nucleus. Contributes to the transparency and refractive index of the lens. In its oxidized form (absence of intramolecular disulfide bond), acts as a chaperone, preventing aggregation of various proteins under a wide range of stress conditions. Required for the correct formation of lens intermediate filaments as part of a complex composed of BFSP1, BFSP2 and CRYAA. The polypeptide is Alpha-crystallin A chain (CRYAA) (Galegeeska rufescens (East African rufous sengi)).